The primary structure comprises 435 residues: Serine--tRNA ligase (435 aa).

Positions 41–70 (QVKTEELQAQRNSRSKSIGQAKAKGDHEEA) are disordered. The segment covering 49 to 58 (AQRNSRSKSI) has biased composition (polar residues). 242–244 (TAE) lines the L-serine pocket. Residue 273–275 (RSE) coordinates ATP. Residue Glu296 coordinates L-serine. 360–363 (EISS) contributes to the ATP binding site. Ser396 contacts L-serine.

It belongs to the class-II aminoacyl-tRNA synthetase family. Type-1 seryl-tRNA synthetase subfamily. As to quaternary structure, homodimer. The tRNA molecule binds across the dimer.

Its subcellular location is the cytoplasm. The enzyme catalyses tRNA(Ser) + L-serine + ATP = L-seryl-tRNA(Ser) + AMP + diphosphate + H(+). The catalysed reaction is tRNA(Sec) + L-serine + ATP = L-seryl-tRNA(Sec) + AMP + diphosphate + H(+). It functions in the pathway aminoacyl-tRNA biosynthesis; selenocysteinyl-tRNA(Sec) biosynthesis; L-seryl-tRNA(Sec) from L-serine and tRNA(Sec): step 1/1. Functionally, catalyzes the attachment of serine to tRNA(Ser). Is also able to aminoacylate tRNA(Sec) with serine, to form the misacylated tRNA L-seryl-tRNA(Sec), which will be further converted into selenocysteinyl-tRNA(Sec). The chain is Serine--tRNA ligase from Aliivibrio fischeri (strain ATCC 700601 / ES114) (Vibrio fischeri).